A 237-amino-acid polypeptide reads, in one-letter code: D-aminoacyl-tRNA deacylase (237 aa).

This sequence belongs to the DtdA deacylase family. As to quaternary structure, monomer. Requires Zn(2+) as cofactor.

It catalyses the reaction a D-aminoacyl-tRNA + H2O = a tRNA + a D-alpha-amino acid + H(+). It carries out the reaction glycyl-tRNA(Ala) + H2O = tRNA(Ala) + glycine + H(+). Its function is as follows. D-aminoacyl-tRNA deacylase with broad substrate specificity. By recycling D-aminoacyl-tRNA to D-amino acids and free tRNA molecules, this enzyme counteracts the toxicity associated with the formation of D-aminoacyl-tRNA entities in vivo. This chain is D-aminoacyl-tRNA deacylase, found in Saccharolobus islandicus (strain Y.N.15.51 / Yellowstone #2) (Sulfolobus islandicus).